A 566-amino-acid polypeptide reads, in one-letter code: DASGATLAKRQQVVNHLLEHIYDHTHFTDLKNIAGTFSPEAATSIYTDDMEELRDGRLLEQHHWFSLFNTRQRMLFEVLIHCKSWECFLDNAAYFRERMNEGEFVYAIYVAVIHSGIGHGIVIPPIYEVTPHIFTNSEVINKAYSAKMTQTPGRFNMDFTGTKKNKEQRVAYFGEDIGMNIHHVTWHMDFPFWWKDSYGYHLDRKGELFFWVHHQLTARFDSERISNWIDVVDEIHWSCIEGFAPHTSYKYGGEFPARPDNVHFEDVDGVARVRDSRIRDALAHGYLLDNSGNKSSVYSPNVQYYGAIHNTAHIMIGRQGDHKFDMPPGVMEHFETATRDPSFFRLHKYMDNIFKEHKDSLPPYTKNDIAVPGVVIDSVAQLKTFFDTFEVNLGNAKVADVAISADVHRINHEEFSYNIDISNTDKIFICPVKDDNGIMDKFYKSIDPGTNHIVRKSVDSSVTVPDRQYALDLHMFERSCGIPNRDMIIIESRPDGMDFALFVTVDDPEEIGATHSQHGIKKYPDKKPMGYPVDRSIPDNRVFLESPNIKRTYVKVFHDEHGGEQH.

The cysteines at positions 82 and 87 are disulfide-linked. The Cu cation site is built by histidine 183, histidine 187, histidine 213, histidine 309, histidine 313, and histidine 347.

The protein belongs to the tyrosinase family. Hemocyanin subfamily. In terms of tissue distribution, hemolymph.

It localises to the secreted. The protein resides in the extracellular space. Its function is as follows. Hemocyanins are copper-containing oxygen carriers occurring freely dissolved in the hemolymph of many mollusks and arthropods. This is Hemocyanin B chain from Astacus leptodactylus (Turkish narrow-clawed crayfish).